Reading from the N-terminus, the 444-residue chain is Ribosomal protein uS12 methylthiotransferase RimO (444 aa).

One can recognise an MTTase N-terminal domain in the interval 2 to 118; the sequence is LKIALESLGC…IDKILKELSE (117 aa). Cysteine 11, cysteine 47, cysteine 81, cysteine 155, cysteine 159, and cysteine 162 together coordinate [4Fe-4S] cluster. Positions 141 to 371 constitute a Radical SAM core domain; that stretch reads STPSYMAYLK…MMIQQKISEE (231 aa). Residues 374–441 enclose the TRAM domain; sequence DKKIGKTYEV…EYDLMGDVLY (68 aa).

It belongs to the methylthiotransferase family. RimO subfamily. [4Fe-4S] cluster is required as a cofactor.

It localises to the cytoplasm. The enzyme catalyses L-aspartate(89)-[ribosomal protein uS12]-hydrogen + (sulfur carrier)-SH + AH2 + 2 S-adenosyl-L-methionine = 3-methylsulfanyl-L-aspartate(89)-[ribosomal protein uS12]-hydrogen + (sulfur carrier)-H + 5'-deoxyadenosine + L-methionine + A + S-adenosyl-L-homocysteine + 2 H(+). Functionally, catalyzes the methylthiolation of an aspartic acid residue of ribosomal protein uS12. The polypeptide is Ribosomal protein uS12 methylthiotransferase RimO (Clostridioides difficile (strain 630) (Peptoclostridium difficile)).